A 154-amino-acid chain; its full sequence is Cytochrome c-550 (154 aa).

The signal sequence occupies residues 1 to 20 (MKISIYATLAALSLALPAVA). Gln21 is modified (pyrrolidone carboxylic acid). The heme c site is built by Cys35, Cys38, His39, and Met120. Residues 150–154 (EGAAN) constitute a propeptide that is removed on maturation.

Post-translationally, binds 1 heme c group covalently per subunit.

The sequence is that of Cytochrome c-550 (cyc) from Paracoccus versutus (Thiobacillus versutus).